We begin with the raw amino-acid sequence, 297 residues long: Lysenin (297 aa).

Residues 10–33 are N-terminal cap domain; the sequence is EQIEVDVVAVWKEGYVYENRGSTS. A beta-hairpin domain region spans residues 34 to 107; sequence VDQKITITKG…SKVIEHTITI (74 aa). The interval 108 to 156 is N-terminal cap domain; the sequence is PPTSKFTRWQLNADVGGADIEYMYLIDEVTPIGGTQSIPQVITSRAKII. The C-terminal receptor-binding domain stretch occupies residues 157 to 297; sequence VGRQIILGKT…EDKWILEVVG (141 aa). K185, S227, Y233, and Y282 together coordinate an N-(acyl)-sphingosylphosphocholine. C272 and C283 are joined by a disulfide.

It belongs to the lysenin family. Binds to sphingomyelin as a monomer by using its C-terminal domain. Forms a nonamer when sphingomyelin/lysenin ratio is lower than ca 500. Oligomerization, but not binding, is influenced by the fluidity of sphingomyelin. Expressed by coelomocytes.

It localises to the secreted. It is found in the target cell membrane. Functionally, pore-forming toxin that defensively acts against parasitic microorganisms by forming pores in sphingomyelin-containing membranes. Has hemolytic activity and is also cytotoxic to spermatozoa of some species of invertebrates and many species of vertebrates and to amphibian larvae, guinea pig polymorphonuclear leukocytes, chicken fibroblasts, normal spleen cells and various tumor cells. Is lethal for various species of reptiles, amphibian, birds and mammals. Induces smooth muscle contraction. It binds sphingomyelin and induces hemolysis in the same manner as lysenin-related protein 2, and is 10-fold more effective than lysenin-related protein 1. The polypeptide is Lysenin (Eisenia fetida (Red wiggler worm)).